Consider the following 281-residue polypeptide: Mad-like protein 1 (281 aa).

Residues S71–S80 show a composition bias toward low complexity. The disordered stretch occupies residues S71 to K105. Residues H95–R108 are basic motif. The 53-residue stretch at H95–L147 folds into the bHLH domain. The helix-loop-helix motif stretch occupies residues A109–L147. Positions I144–T185 form a coiled coil. Residues C189–P213 form a disordered region. Residues R200–S212 are compositionally biased toward low complexity.

As to quaternary structure, forms heterodimer with mxl-1 in the presence and absence of DNA. Ubiquitinated. Expressed in intestinal cells in adults. Expressed in D-type motor neuron cell bodies.

The protein resides in the nucleus. Functionally, transcriptional regulator which binds to the E box motif 5'-CACGTG-3', when in a heterodimeric complex with mxl-1. Involved in the control of lifespan in response to dietary restriction, the decline in protein homeostasis associated with normal aging, germline signaling and may overlap with the insulin-like signaling pathway. Plays a role in autophagy. Involved in promoting infection by the microsporidian pathogen N.parisii, possibly together with transcription factors pha-4 and zip-10. In response to neuronal injury, mdl-1 is targeted by sdz-33 for ubiquitin-mediated degradation, probably thereby reducing levels of mdl-1-mxl-1 heterodimers, allowing free mxl-1 to form complexes with tdpt-1 and thus inhibiting tdpt-1-dependent sumoylation of ets-4. This is Mad-like protein 1 from Caenorhabditis elegans.